We begin with the raw amino-acid sequence, 404 residues long: Exodeoxyribonuclease 7 large subunit (404 aa).

It belongs to the XseA family. As to quaternary structure, heterooligomer composed of large and small subunits.

It localises to the cytoplasm. It catalyses the reaction Exonucleolytic cleavage in either 5'- to 3'- or 3'- to 5'-direction to yield nucleoside 5'-phosphates.. In terms of biological role, bidirectionally degrades single-stranded DNA into large acid-insoluble oligonucleotides, which are then degraded further into small acid-soluble oligonucleotides. This Caldanaerobacter subterraneus subsp. tengcongensis (strain DSM 15242 / JCM 11007 / NBRC 100824 / MB4) (Thermoanaerobacter tengcongensis) protein is Exodeoxyribonuclease 7 large subunit.